Consider the following 441-residue polypeptide: NADH-quinone oxidoreductase subunit D (441 aa).

Belongs to the complex I 49 kDa subunit family. As to quaternary structure, NDH-1 is composed of 14 different subunits. Subunits NuoB, C, D, E, F, and G constitute the peripheral sector of the complex.

It is found in the cell membrane. The enzyme catalyses a quinone + NADH + 5 H(+)(in) = a quinol + NAD(+) + 4 H(+)(out). NDH-1 shuttles electrons from NADH, via FMN and iron-sulfur (Fe-S) centers, to quinones in the respiratory chain. The immediate electron acceptor for the enzyme in this species is believed to be a menaquinone. Couples the redox reaction to proton translocation (for every two electrons transferred, four hydrogen ions are translocated across the cytoplasmic membrane), and thus conserves the redox energy in a proton gradient. The chain is NADH-quinone oxidoreductase subunit D from Mycobacterium avium (strain 104).